The following is a 974-amino-acid chain: UvrABC system protein A (974 aa).

Residue 34-41 (GLSGSGKS) coordinates ATP. 2 ABC transporter domains span residues 331–610 (WARS…TNSL) and 630–959 (ISKT…QFLK). An ATP-binding site is contributed by 663–670 (GVSGGGKS). The C4-type zinc-finger motif lies at 762–788 (CEACQGDGVIKIEMHFLPDVYVTCDVC).

Belongs to the ABC transporter superfamily. UvrA family. Forms a heterotetramer with UvrB during the search for lesions.

The protein localises to the cytoplasm. Its function is as follows. The UvrABC repair system catalyzes the recognition and processing of DNA lesions. UvrA is an ATPase and a DNA-binding protein. A damage recognition complex composed of 2 UvrA and 2 UvrB subunits scans DNA for abnormalities. When the presence of a lesion has been verified by UvrB, the UvrA molecules dissociate. In Brucella abortus (strain 2308), this protein is UvrABC system protein A.